We begin with the raw amino-acid sequence, 249 residues long: uncharacterized protein (249 aa).

The segment covering 51-67 (IPKDSLTNGKSSKNCMS) has biased composition (polar residues). Disordered stretches follow at residues 51–131 (IPKD…DSPV) and 205–240 (YLNA…SSDG). Low complexity predominate over residues 93–106 (SFQSMNSSMSSSTQ). A compositionally biased stretch (basic and acidic residues) spans 110–129 (RILDEKNKDQSSSNENDRDS).

The protein belongs to the asfivirus DP238L family.

This is an uncharacterized protein from African swine fever virus (isolate Tick/Malawi/Lil 20-1/1983) (ASFV).